The sequence spans 581 residues: MNLFTEMRGLVLEALEQMQAEGALPQGLDFANVAVEPPRDAAHGDMATNAAMVLAKPAGQKPRDIAETLAARLAADARVAKAEVAGPGFLNLTLAAPVWQRVVGTVLLDGTAYGRSDMGQGKKVNVEYVSANPTGPLHVGHTRGAVFGDALASLLDYAGYQVTREYYINDGGAQVDVLARSVYLRYLEAHGQAVEFVDGTYPGEYLVEVGQALKDKVGDAYVGQPEEVWLEAIRDFATDAMMELIRADLAQLGVKMDVFYSEKSLYGTGRIEAAIDSLRAKGLIYRGTLEPPKGKLPEDWEPREQTLFKSTEHGDDVDRPIMKSDGAWTYFAPDIAYHYDKVSRGFDALIDVFGADHGGYVKRMKAAVSALSDGRVPLDIKLCQLVKLWKNGEPFKMSKRAGNFVTLRDVVDQVGADVTRFVMLTRKNDAPLDFDFDKVLEQSRENPVFYVQYAHARVSSVLRRAAEAGIDTSDTALRAADLGLLGHEAELAVMRKLAEWPRLVEIAARTNEPHRIAFYLYELAGDFHALWNRGNDVSELRFIQDGDEGTSQAKIALARSVAVVISAGLAILGVTPAEEMR.

The 'HIGH' region motif lies at 131–141 (ANPTGPLHVGH).

Belongs to the class-I aminoacyl-tRNA synthetase family. In terms of assembly, monomer.

It is found in the cytoplasm. The enzyme catalyses tRNA(Arg) + L-arginine + ATP = L-arginyl-tRNA(Arg) + AMP + diphosphate. The protein is Arginine--tRNA ligase of Ruegeria pomeroyi (strain ATCC 700808 / DSM 15171 / DSS-3) (Silicibacter pomeroyi).